The following is a 334-amino-acid chain: tRNA N6-adenosine threonylcarbamoyltransferase (334 aa).

His110 and His114 together coordinate Fe cation. Substrate-binding positions include Ile133–Gly137, Asp166, Gly179, Asp183, and Asn275. Residue Asp303 coordinates Fe cation.

The protein belongs to the KAE1 / TsaD family. Requires Fe(2+) as cofactor.

Its subcellular location is the cytoplasm. It catalyses the reaction L-threonylcarbamoyladenylate + adenosine(37) in tRNA = N(6)-L-threonylcarbamoyladenosine(37) in tRNA + AMP + H(+). Its function is as follows. Required for the formation of a threonylcarbamoyl group on adenosine at position 37 (t(6)A37) in tRNAs that read codons beginning with adenine. Is involved in the transfer of the threonylcarbamoyl moiety of threonylcarbamoyl-AMP (TC-AMP) to the N6 group of A37, together with TsaE and TsaB. TsaD likely plays a direct catalytic role in this reaction. This chain is tRNA N6-adenosine threonylcarbamoyltransferase, found in Salinibacter ruber (strain DSM 13855 / M31).